A 263-amino-acid polypeptide reads, in one-letter code: 4-hydroxy-2-oxo-heptane-1,7-dioate aldolase (263 aa).

Residue His45 is the Proton acceptor of the active site. Position 147 (Gln147) interacts with substrate. Glu149 serves as a coordination point for a divalent metal cation. The substrate site is built by Ala174 and Asp175. Position 175 (Asp175) interacts with a divalent metal cation.

It belongs to the HpcH/HpaI aldolase family. Homohexamer; trimer of dimers. A divalent metal cation serves as cofactor.

The catalysed reaction is 4-hydroxy-2-oxoheptanedioate = succinate semialdehyde + pyruvate. It participates in aromatic compound metabolism; 4-hydroxyphenylacetate degradation; pyruvate and succinate semialdehyde from 4-hydroxyphenylacetate: step 7/7. Its function is as follows. Catalyzes the reversible retro-aldol cleavage of 4-hydroxy-2-ketoheptane-1,7-dioate (HKHD) to pyruvate and succinic semialdehyde. The sequence is that of 4-hydroxy-2-oxo-heptane-1,7-dioate aldolase from Salmonella choleraesuis (strain SC-B67).